A 970-amino-acid polypeptide reads, in one-letter code: Transposase for insertion sequence element IS1071 in transposon Tn5271 (970 aa).

This sequence belongs to the transposase 7 family.

Functionally, required for transposition of transposon Tn5271. This Comamonas testosteroni (Pseudomonas testosteroni) protein is Transposase for insertion sequence element IS1071 in transposon Tn5271.